The primary structure comprises 321 residues: Porphobilinogen deaminase (321 aa).

Cysteine 246 carries the post-translational modification S-(dipyrrolylmethanemethyl)cysteine.

It belongs to the HMBS family. As to quaternary structure, monomer. Requires dipyrromethane as cofactor.

It catalyses the reaction 4 porphobilinogen + H2O = hydroxymethylbilane + 4 NH4(+). Its pathway is porphyrin-containing compound metabolism; protoporphyrin-IX biosynthesis; coproporphyrinogen-III from 5-aminolevulinate: step 2/4. In terms of biological role, tetrapolymerization of the monopyrrole PBG into the hydroxymethylbilane pre-uroporphyrinogen in several discrete steps. The protein is Porphobilinogen deaminase of Helicobacter hepaticus (strain ATCC 51449 / 3B1).